A 414-amino-acid chain; its full sequence is Dimethylsulfoniopropionate lyase DddY (414 aa).

A signal peptide spans 1–18; the sequence is MKYMVLFSGLLFSNVLVA.

This sequence belongs to the DMSP lyase DddY family.

The protein resides in the periplasm. It catalyses the reaction S,S-dimethyl-beta-propiothetin = acrylate + dimethyl sulfide + H(+). Catalyzes the cleavage of dimethylsulfoniopropionate (DMSP) into dimethyl sulfide (DMS) and acrylate. This chain is Dimethylsulfoniopropionate lyase DddY, found in Shewanella woodyi (strain ATCC 51908 / MS32).